The sequence spans 155 residues: 6,7-dimethyl-8-ribityllumazine synthase (155 aa).

5-amino-6-(D-ribitylamino)uracil is bound by residues F24, 58-60 (AFE), and 82-84 (AII). 87–88 (ST) is a (2S)-2-hydroxy-3-oxobutyl phosphate binding site. H90 functions as the Proton donor in the catalytic mechanism. F115 serves as a coordination point for 5-amino-6-(D-ribitylamino)uracil. R129 serves as a coordination point for (2S)-2-hydroxy-3-oxobutyl phosphate.

It belongs to the DMRL synthase family.

The enzyme catalyses (2S)-2-hydroxy-3-oxobutyl phosphate + 5-amino-6-(D-ribitylamino)uracil = 6,7-dimethyl-8-(1-D-ribityl)lumazine + phosphate + 2 H2O + H(+). Its pathway is cofactor biosynthesis; riboflavin biosynthesis; riboflavin from 2-hydroxy-3-oxobutyl phosphate and 5-amino-6-(D-ribitylamino)uracil: step 1/2. Its function is as follows. Catalyzes the formation of 6,7-dimethyl-8-ribityllumazine by condensation of 5-amino-6-(D-ribitylamino)uracil with 3,4-dihydroxy-2-butanone 4-phosphate. This is the penultimate step in the biosynthesis of riboflavin. The polypeptide is 6,7-dimethyl-8-ribityllumazine synthase (Chlorobium phaeovibrioides (strain DSM 265 / 1930) (Prosthecochloris vibrioformis (strain DSM 265))).